The sequence spans 157 residues: Phosphopantetheine adenylyltransferase (157 aa).

Belongs to the eukaryotic CoaD family. In terms of assembly, monomer.

The protein localises to the cytoplasm. It catalyses the reaction (R)-4'-phosphopantetheine + ATP + H(+) = 3'-dephospho-CoA + diphosphate. It functions in the pathway cofactor biosynthesis; coenzyme A biosynthesis. Functionally, reversibly transfers an adenylyl group from ATP to 4'-phosphopantetheine, yielding dephospho-CoA (dPCoA) and pyrophosphate. The sequence is that of Phosphopantetheine adenylyltransferase from Pyrococcus abyssi (strain GE5 / Orsay).